The chain runs to 490 residues: Nicotinate phosphoribosyltransferase (490 aa).

At His206 the chain carries Phosphohistidine.

The protein belongs to the NAPRTase family. Transiently phosphorylated on a His residue during the reaction cycle. Phosphorylation strongly increases the affinity for substrates and increases the rate of nicotinate D-ribonucleotide production. Dephosphorylation regenerates the low-affinity form of the enzyme, leading to product release.

It catalyses the reaction nicotinate + 5-phospho-alpha-D-ribose 1-diphosphate + ATP + H2O = nicotinate beta-D-ribonucleotide + ADP + phosphate + diphosphate. It participates in cofactor biosynthesis; NAD(+) biosynthesis; nicotinate D-ribonucleotide from nicotinate: step 1/1. Its function is as follows. Catalyzes the synthesis of beta-nicotinate D-ribonucleotide from nicotinate and 5-phospho-D-ribose 1-phosphate at the expense of ATP. The chain is Nicotinate phosphoribosyltransferase (pncB) from Bacillus subtilis (strain 168).